A 431-amino-acid polypeptide reads, in one-letter code: Serine hydroxymethyltransferase (431 aa).

Residue 122-124 (GHI) coordinates (6S)-5,6,7,8-tetrahydrofolate. Position 228 is an N6-(pyridoxal phosphate)lysine (Lys228). Glu245 lines the (6S)-5,6,7,8-tetrahydrofolate pocket.

Belongs to the SHMT family. As to quaternary structure, homodimer. Pyridoxal 5'-phosphate serves as cofactor.

It localises to the cytoplasm. It functions in the pathway amino-acid biosynthesis; glycine biosynthesis; glycine from L-serine: step 1/1. Its function is as follows. Catalyzes the reversible interconversion of serine and glycine with a modified folate serving as the one-carbon carrier. Also exhibits a pteridine-independent aldolase activity toward beta-hydroxyamino acids, producing glycine and aldehydes, via a retro-aldol mechanism. This Thermococcus kodakarensis (strain ATCC BAA-918 / JCM 12380 / KOD1) (Pyrococcus kodakaraensis (strain KOD1)) protein is Serine hydroxymethyltransferase.